A 71-amino-acid polypeptide reads, in one-letter code: uncharacterized protein (71 aa).

The next 2 membrane-spanning stretches (helical) occupy residues 9–29 (FVIFSLFFTFISVSTFGNINF) and 41–61 (FVALFYIFTHTSFTSLCFFGL).

It is found in the membrane. This is an uncharacterized protein from Acheta domesticus (House cricket).